Consider the following 191-residue polypeptide: Prostaglandin-H2 D-isomerase (191 aa).

A signal peptide spans 1–24 (MGALCTLWLGLVLLGVLGALQTSA). At glutamine 25 the chain carries Pyrrolidone carboxylic acid. A glycan (N-linked (GlcNAc...) asparagine) is linked at asparagine 51. The Nucleophile role is filled by cysteine 65. Asparagine 78 is a glycosylation site (N-linked (GlcNAc...) asparagine). Cysteine 89 and cysteine 186 are disulfide-bonded.

This sequence belongs to the calycin superfamily. Lipocalin family. Monomer. Post-translationally, N- and O-glycosylated. Both N-glycosylation recognition sites are almost quantitatively occupied by N-glycans of the biantennary complex type, with a considerable proportion of structures bearing a bisecting GlcNAc. N-glycan at Asn-78: dHex1Hex5HexNAc4. Agalacto structure as well as sialylated and nonsialylated oligosaccharides bearing alpha2-3- and/or alpha2-6-linked NeuNAc are present.

The protein resides in the rough endoplasmic reticulum. Its subcellular location is the nucleus membrane. The protein localises to the golgi apparatus. It is found in the cytoplasm. It localises to the perinuclear region. The protein resides in the secreted. It catalyses the reaction prostaglandin H2 = prostaglandin D2. Functionally, catalyzes the conversion of PGH2 to PGD2, a prostaglandin involved in smooth muscle contraction/relaxation and a potent inhibitor of platelet aggregation. Involved in a variety of CNS functions, such as sedation, NREM sleep and PGE2-induced allodynia, and may have an anti-apoptotic role in oligodendrocytes. Binds small non-substrate lipophilic molecules, including biliverdin, bilirubin, retinal, retinoic acid and thyroid hormone, and may act as a scavenger for harmful hydrophobic molecules and as a secretory retinoid and thyroid hormone transporter. Possibly involved in development and maintenance of the blood-brain, blood-retina, blood-aqueous humor and blood-testis barrier. It is likely to play important roles in both maturation and maintenance of the central nervous system and male reproductive system. Involved in PLA2G3-dependent maturation of mast cells. PLA2G3 is secreted by immature mast cells and acts on nearby fibroblasts upstream to PTDGS to synthesize PGD2, which in turn promotes mast cell maturation and degranulation via PTGDR. This is Prostaglandin-H2 D-isomerase (PTGDS) from Canis lupus familiaris (Dog).